The primary structure comprises 133 residues: ATP synthase epsilon chain (133 aa).

The protein belongs to the ATPase epsilon chain family. As to quaternary structure, F-type ATPases have 2 components, CF(1) - the catalytic core - and CF(0) - the membrane proton channel. CF(1) has five subunits: alpha(3), beta(3), gamma(1), delta(1), epsilon(1). CF(0) has three main subunits: a, b and c.

It is found in the cell membrane. In terms of biological role, produces ATP from ADP in the presence of a proton gradient across the membrane. This chain is ATP synthase epsilon chain (atpC), found in Alkalihalophilus pseudofirmus (strain ATCC BAA-2126 / JCM 17055 / OF4) (Bacillus pseudofirmus).